The chain runs to 81 residues: Acyl carrier protein (81 aa).

The Carrier domain occupies 3–78 (QEIFEKVKSI…AAVDYIEKEQ (76 aa)). Ser-38 is modified (O-(pantetheine 4'-phosphoryl)serine).

This sequence belongs to the acyl carrier protein (ACP) family. In terms of processing, 4'-phosphopantetheine is transferred from CoA to a specific serine of apo-ACP by AcpS. This modification is essential for activity because fatty acids are bound in thioester linkage to the sulfhydryl of the prosthetic group.

The protein localises to the cytoplasm. It functions in the pathway lipid metabolism; fatty acid biosynthesis. Carrier of the growing fatty acid chain in fatty acid biosynthesis. In Crocosphaera subtropica (strain ATCC 51142 / BH68) (Cyanothece sp. (strain ATCC 51142)), this protein is Acyl carrier protein.